Reading from the N-terminus, the 166-residue chain is Testis-expressed protein 51 (166 aa).

An N-terminal signal peptide occupies residues 1–15; the sequence is MLPLLIICLLPAIEG. A helical transmembrane segment spans residues 138–154; sequence SLWAVSLSSALLLAIAG.

The protein resides in the membrane. The protein is Testis-expressed protein 51 of Homo sapiens (Human).